The chain runs to 294 residues: Osteopontin (294 aa).

A signal peptide spans Met-1–Ser-16. Phosphoserine is present on residues Ser-24, Ser-26, Ser-27, Ser-61, Ser-62, Ser-75, Ser-77, Ser-80, Ser-106, Ser-109, Ser-112, Ser-115, and Ser-118. Positions Trp-42–Asp-274 are disordered. The segment covering Ser-48–Ser-61 has biased composition (polar residues). Residues Asp-85–Asp-110 are compositionally biased toward acidic residues. Over residues Thr-121–Thr-130 the composition is skewed to polar residues. Thr-123, Thr-132, and Thr-137 each carry an O-linked (GalNAc...) threonine glycan. The short motif at Arg-144–Asp-146 is the Cell attachment site element. Phosphothreonine occurs at positions 170 and 175. Over residues Leu-174–Leu-187 the composition is skewed to basic and acidic residues. Residues Ser-176, Ser-180, Ser-200, Ser-209, Ser-213, and Ser-219 each carry the phosphoserine modification. Over residues Ser-197 to Asp-216 the composition is skewed to polar residues. Ser-219 is a glycosylation site (O-linked (Xyl...) (chondroitin sulfate) serine). Residues Leu-220–Gln-232 show a composition bias toward basic and acidic residues. The residue at position 222 (Thr-222) is a Phosphothreonine. Phosphoserine occurs at positions 228, 231, 234, 238, 243, 247, 250, 255, 260, 271, 283, 288, 290, and 291. A compositionally biased stretch (polar residues) spans Ser-234–Ala-249. Positions Asp-263–Asp-274 are enriched in basic and acidic residues. O-linked (Xyl...) (chondroitin sulfate) serine glycosylation occurs at Ser-288.

It belongs to the osteopontin family. As to quaternary structure, interacts (via N-terminus) with integrin ITGA9:ITGB1. In terms of processing, extensively phosphorylated by FAM20C in the extracellular medium at multiple sites within the S-x-E/pS motif. The phosphorylated form inhibits hydroxyapatite crystallization. Dephosphorylation via a mechanism involving ALPL/TNAP promotes hydroxyapatite crystallization. O-glycosylated. Post-translationally, forms covalent cross-links mediated by transglutaminase TGM2, between a glutamine and the epsilon-amino group of a lysine residue, forming homopolymers and heteropolymers, increasing its collagen binding properties.

It localises to the secreted. Functionally, major non-collagenous bone protein that binds tightly to hydroxyapatite. Appears to form an integral part of the mineralized matrix. Probably important to cell-matrix interaction. In terms of biological role, acts as a cytokine involved in enhancing production of interferon-gamma and interleukin-12 and reducing production of interleukin-10 and is essential in the pathway that leads to type I immunity. This is Osteopontin (Spp1) from Mus musculus (Mouse).